The chain runs to 540 residues: uncharacterized protein (540 aa).

Topologically, residues 1 to 61 (MFSIFKKKTS…TNDSPWQDPT (61 aa)) are cytoplasmic. Residues 62–82 (YFSSFGKELMFIATCMLAQLL) form a helical membrane-spanning segment. Residues 83-108 (NQAGQTHALCIMNVLSKSFNSEANNQ) lie on the Extracellular side of the membrane. A helical membrane pass occupies residues 109–129 (AWLMASFPLAAGSFILISGRL). Residues 130 to 131 (GD) are Cytoplasmic-facing. Residues 132–152 (IYGLKKMLIVGYVIVIVWSII) form a helical membrane-spanning segment. Over 153–169 (SGLSKYSNSDAFFITSR) the chain is Extracellular. Residues 170–190 (AFQGVGIAFILPNIMGLVGHV) traverse the membrane as a helical segment. Residues 191-203 (YKVGSFRKNIVIS) lie on the Cytoplasmic side of the membrane. Residues 204-224 (FIGACAPTGGMFGGLFGGLIV) traverse the membrane as a helical segment. At 225–232 (TEDPNQWP) the chain is on the extracellular side. The helical transmembrane segment at 233–253 (WVFYAFGIATFLSLLMAWYSI) threads the bilayer. Topologically, residues 254 to 272 (PNNVPTNIHGLSMDWTGSA) are cytoplasmic. A helical transmembrane segment spans residues 273-293 (LAIIGLILFNFVWNQAPIVGW). The Extracellular segment spans residues 294 to 295 (DK). A helical transmembrane segment spans residues 296 to 316 (PYIIVLLIISVIFLVAFFVYE). The Cytoplasmic segment spans residues 317–334 (SKYAEVPLLPRAMTKNRH). The chain crosses the membrane as a helical span at residues 335 to 355 (MIMILLAVFLGWGSFGIWTFY). Topologically, residues 356-372 (YVSFQLNLRHYSPVWTG) are extracellular. Residues 373–393 (GTYFVFVIFGSMAAFFVAFSI) traverse the membrane as a helical segment. Residues 394–398 (KRLGP) lie on the Cytoplasmic side of the membrane. Residues 399-419 (ALLLCFSLMAFDAGSIMFSVL) form a helical membrane-spanning segment. The Extracellular portion of the chain corresponds to 420–429 (PVEQSYWKLN). The helical transmembrane segment at 430 to 450 (FAMQAILCFGMDLSFPASSII) threads the bilayer. Over 451-461 (LSDGLPMQYQG) the chain is Cytoplasmic. The helical transmembrane segment at 462-482 (MAGSLVNTVINYSASLCLGMG) threads the bilayer. Residues 483-502 (GTVEHQINKSGNDLLKGYRA) are Extracellular-facing. Residues 503-523 (AVYLGVGLASLGVVISVTYML) form a helical membrane-spanning segment. Residues 524–540 (ENLWNRHRKSEDRSLEA) are Cytoplasmic-facing.

The protein belongs to the major facilitator superfamily.

It is found in the membrane. This is an uncharacterized protein from Saccharomyces cerevisiae (strain ATCC 204508 / S288c) (Baker's yeast).